The chain runs to 464 residues: Phosphoglucosamine mutase (464 aa).

Catalysis depends on Ser-112, which acts as the Phosphoserine intermediate. 4 residues coordinate Mg(2+): Ser-112, Asp-252, Asp-254, and Asp-256. Ser-112 carries the post-translational modification Phosphoserine.

This sequence belongs to the phosphohexose mutase family. Requires Mg(2+) as cofactor. Post-translationally, activated by phosphorylation.

It catalyses the reaction alpha-D-glucosamine 1-phosphate = D-glucosamine 6-phosphate. Its function is as follows. Catalyzes the conversion of glucosamine-6-phosphate to glucosamine-1-phosphate. The polypeptide is Phosphoglucosamine mutase (Synechococcus sp. (strain CC9902)).